A 229-amino-acid polypeptide reads, in one-letter code: Aminodeoxyfutalosine nucleosidase (229 aa).

The Proton acceptor role is filled by Glu13. Residues Gly79, Ile153, and 173-174 (ME) contribute to the substrate site. Residue Asp197 is the Proton donor of the active site.

It belongs to the PNP/UDP phosphorylase family. In terms of assembly, homodimer.

It catalyses the reaction 6-amino-6-deoxyfutalosine + H2O = dehypoxanthine futalosine + adenine. It carries out the reaction S-adenosyl-L-homocysteine + H2O = S-(5-deoxy-D-ribos-5-yl)-L-homocysteine + adenine. The enzyme catalyses S-methyl-5'-thioadenosine + H2O = 5-(methylsulfanyl)-D-ribose + adenine. The catalysed reaction is 5'-deoxyadenosine + H2O = 5-deoxy-D-ribose + adenine. Its pathway is quinol/quinone metabolism; menaquinone biosynthesis. It functions in the pathway amino-acid biosynthesis; L-methionine biosynthesis via salvage pathway; S-methyl-5-thio-alpha-D-ribose 1-phosphate from S-methyl-5'-thioadenosine (hydrolase route): step 1/2. Its function is as follows. Catalyzes the direct conversion of aminodeoxyfutalosine (AFL) into dehypoxanthine futalosine (DHFL) and adenine via the hydrolysis of the N-glycosidic bond; this reaction seems to represent an essential step in the menaquinone biosynthesis pathway in Campylobacter species. Also catalyzes the hydrolysis of 5'-methylthioadenosine (MTA) to adenine and 5'-methylthioribose. Can also probably use S-adenosylhomocysteine (SAH) as substrate, leading to adenine and S-ribosylhomocysteine. These other activities highlight the tremendous versatility of the enzyme, which also plays key roles in S-adenosylmethionine recycling and in the biosynthesis of the quorum-sensing molecule autoinducer-2. Shows negligible activity with futalosine (FL) as substrate. The polypeptide is Aminodeoxyfutalosine nucleosidase (pfs) (Campylobacter jejuni subsp. jejuni serotype O:2 (strain ATCC 700819 / NCTC 11168)).